The following is a 515-amino-acid chain: Vacuolar segregation protein PEP7 (515 aa).

Residues 6-29 (VSCPICLRKFDNLQALNAHLDVEH) form a C2H2-type zinc finger. A disordered region spans residues 36 to 58 (DSLGSNDSRLVNGKQKKARSVDS). An FYVE-type 1; atypical zinc finger spans residues 72-137 (KKGKSCCHTC…CCHDCFVTKP (66 aa)). 16 residues coordinate Zn(2+): Cys-78, Cys-81, Cys-94, Cys-97, Cys-102, His-105, Cys-129, Cys-132, Cys-221, Cys-224, Cys-237, Cys-240, Cys-245, Cys-252, Cys-289, and Cys-292. The FYVE-type 2 zinc-finger motif lies at 215–297 (DRSVLFCNIC…LCSHCIDMLF (83 aa)).

Interacts with VPS21, VPS45, PEP3 and PEP5.

The protein resides in the vacuole membrane. Its function is as follows. Required for vacuole segregation and vacuole protein sorting. Possibly part of a complex which tethers the vacuole membrane to microtubules, either directly or via kinesin or dynein-like motor proteins. Probably functions in several interorganelle traffic pathways. This Saccharomyces cerevisiae (strain ATCC 204508 / S288c) (Baker's yeast) protein is Vacuolar segregation protein PEP7 (PEP7).